Here is a 235-residue protein sequence, read N- to C-terminus: tRNA pseudouridine synthase B (235 aa).

D45 functions as the Nucleophile in the catalytic mechanism.

The protein belongs to the pseudouridine synthase TruB family. Type 1 subfamily.

The catalysed reaction is uridine(55) in tRNA = pseudouridine(55) in tRNA. Responsible for synthesis of pseudouridine from uracil-55 in the psi GC loop of transfer RNAs. This Chlamydia felis (strain Fe/C-56) (Chlamydophila felis) protein is tRNA pseudouridine synthase B.